A 33-amino-acid polypeptide reads, in one-letter code: Phospholipase A2 homolog BmarPLA2 (33 aa).

It belongs to the phospholipase A2 family. Group II subfamily. K49 sub-subfamily. As to quaternary structure, homodimer; non-covalently linked. Expressed by the venom gland.

It is found in the secreted. Functionally, snake phospholipase A2 homolog that lacks enzymatic activity. May display myotoxin activity. In isolated heart decreases cardiac frequency. Also decreases mean arterial pressure. Does not show antimicrobial activity. Does not change renal parameters (such as perfusion pressure, renal vascular resistance, urinary flow, glomerular filtration rate and sodium tubular transport). This chain is Phospholipase A2 homolog BmarPLA2, found in Bothrops marajoensis (Marajo lancehead).